A 223-amino-acid polypeptide reads, in one-letter code: Proteasome subunit beta (223 aa).

Positions 1–6 (MDTMKG) are cleaved as a propeptide — removed in mature form; by autocatalysis. The Nucleophile role is filled by T7.

The protein belongs to the peptidase T1B family. The 20S proteasome core is composed of 14 alpha and 14 beta subunits that assemble into four stacked heptameric rings, resulting in a barrel-shaped structure. The two inner rings, each composed of seven catalytic beta subunits, are sandwiched by two outer rings, each composed of seven alpha subunits. The catalytic chamber with the active sites is on the inside of the barrel. Has a gated structure, the ends of the cylinder being occluded by the N-termini of the alpha-subunits. Is capped at one or both ends by the proteasome regulatory ATPase, PAN.

It localises to the cytoplasm. It catalyses the reaction Cleavage of peptide bonds with very broad specificity.. The formation of the proteasomal ATPase PAN-20S proteasome complex, via the docking of the C-termini of PAN into the intersubunit pockets in the alpha-rings, triggers opening of the gate for substrate entry. Interconversion between the open-gate and close-gate conformations leads to a dynamic regulation of the 20S proteasome proteolysis activity. In terms of biological role, component of the proteasome core, a large protease complex with broad specificity involved in protein degradation. The polypeptide is Proteasome subunit beta (Methanocaldococcus vulcanius (strain ATCC 700851 / DSM 12094 / M7) (Methanococcus vulcanius)).